We begin with the raw amino-acid sequence, 92 residues long: Enhancer of yellow 2 transcription factor (92 aa).

It belongs to the ENY2 family. In terms of assembly, component of the nuclear pore complex (NPC)-associated TREX-2 complex (transcription and export complex 2). Component of the SAGA transcription coactivator-HAT complex. Within the SAGA complex, participates in a subcomplex of SAGA called the DUB module (deubiquitination module).

Its subcellular location is the nucleus. It localises to the nucleoplasm. Its function is as follows. Involved in mRNA export coupled transcription activation by association with both the TREX-2 and the SAGA complexes. The transcription regulatory histone acetylation (HAT) complex SAGA is a multiprotein complex that activates transcription by remodeling chromatin and mediating histone acetylation and deubiquitination. Within the SAGA complex, participates in a subcomplex that specifically deubiquitinates histones. The SAGA complex is recruited to specific gene promoters by activators, where it is required for transcription. The TREX-2 complex functions in docking export-competent ribonucleoprotein particles (mRNPs) to the nuclear entrance of the nuclear pore complex (nuclear basket). TREX-2 participates in mRNA export and accurate chromatin positioning in the nucleus by tethering genes to the nuclear periphery. The chain is Enhancer of yellow 2 transcription factor from Aedes aegypti (Yellowfever mosquito).